Reading from the N-terminus, the 146-residue chain is Large ribosomal subunit protein bL9 (146 aa).

This sequence belongs to the bacterial ribosomal protein bL9 family.

In terms of biological role, binds to the 23S rRNA. In Deinococcus geothermalis (strain DSM 11300 / CIP 105573 / AG-3a), this protein is Large ribosomal subunit protein bL9.